A 485-amino-acid polypeptide reads, in one-letter code: Glutamyl-tRNA(Gln) amidotransferase subunit A (485 aa).

Residues lysine 79 and serine 154 each act as charge relay system in the active site. The active-site Acyl-ester intermediate is serine 178.

The protein belongs to the amidase family. GatA subfamily. Heterotrimer of A, B and C subunits.

It carries out the reaction L-glutamyl-tRNA(Gln) + L-glutamine + ATP + H2O = L-glutaminyl-tRNA(Gln) + L-glutamate + ADP + phosphate + H(+). Its function is as follows. Allows the formation of correctly charged Gln-tRNA(Gln) through the transamidation of misacylated Glu-tRNA(Gln) in organisms which lack glutaminyl-tRNA synthetase. The reaction takes place in the presence of glutamine and ATP through an activated gamma-phospho-Glu-tRNA(Gln). The sequence is that of Glutamyl-tRNA(Gln) amidotransferase subunit A from Carboxydothermus hydrogenoformans (strain ATCC BAA-161 / DSM 6008 / Z-2901).